We begin with the raw amino-acid sequence, 359 residues long: CDP-glucose 4,6-dehydratase (359 aa).

It belongs to the NAD(P)-dependent epimerase/dehydratase family. NAD(+) is required as a cofactor.

It catalyses the reaction CDP-D-glucose = CDP-4-dehydro-6-deoxy-D-glucose + H2O. Its pathway is nucleotide-sugar biosynthesis; CDP-3,6-dideoxy-D-mannose biosynthesis; CDP-3,6-dideoxy-D-mannose from CTP and alpha-D-glucose 1-phosphate: step 2/5. It functions in the pathway bacterial outer membrane biogenesis; LPS O-antigen biosynthesis. In Salmonella typhimurium (strain LT2 / SGSC1412 / ATCC 700720), this protein is CDP-glucose 4,6-dehydratase (rfbG).